The following is a 253-amino-acid chain: uncharacterized protein (253 aa).

An N-terminal signal peptide occupies residues 1 to 25 (MRKKKFLSKVSFGSLFLLCGTVLSA). Residue Cys-26 is the site of N-palmitoyl cysteine attachment. Cys-26 carries the S-diacylglycerol cysteine lipid modification.

Belongs to the MG439/MG440 family.

The protein localises to the cell membrane. This is an uncharacterized protein from Mycoplasma pneumoniae (strain ATCC 29342 / M129 / Subtype 1) (Mycoplasmoides pneumoniae).